Here is a 183-residue protein sequence, read N- to C-terminus: U3 small nucleolar ribonucleoprotein protein imp3 (183 aa).

Positions 108–174 (RRLPVVMRNI…IKKHVMDYNN (67 aa)) constitute an S4 RNA-binding domain.

It belongs to the universal ribosomal protein uS4 family. In terms of assembly, component of a heterotrimeric complex containing imp3, imp4 and mpp10.

It localises to the nucleus. It is found in the nucleolus. In terms of biological role, component of the U3 small nucleolar ribonucleoprotein. Required for the early cleavages at sites A0, A1 and A2 during 18S ribosomal pre-RNA processing. The chain is U3 small nucleolar ribonucleoprotein protein imp3 from Caenorhabditis elegans.